Here is a 162-residue protein sequence, read N- to C-terminus: Endoribonuclease YbeY (162 aa).

Zn(2+) contacts are provided by His-128, His-132, and His-138.

This sequence belongs to the endoribonuclease YbeY family. It depends on Zn(2+) as a cofactor.

It localises to the cytoplasm. Single strand-specific metallo-endoribonuclease involved in late-stage 70S ribosome quality control and in maturation of the 3' terminus of the 16S rRNA. This chain is Endoribonuclease YbeY, found in Lactococcus lactis subsp. cremoris (strain MG1363).